The chain runs to 528 residues: Peptide chain release factor 3 (528 aa).

The tr-type G domain occupies 11–279 (SRRRTFAIIS…GLVDWAPSPQ (269 aa)). GTP is bound by residues 20–27 (SHPDAGKT), 88–92 (DTPGH), and 142–145 (NKLD).

Belongs to the TRAFAC class translation factor GTPase superfamily. Classic translation factor GTPase family. PrfC subfamily.

The protein resides in the cytoplasm. Its function is as follows. Increases the formation of ribosomal termination complexes and stimulates activities of RF-1 and RF-2. It binds guanine nucleotides and has strong preference for UGA stop codons. It may interact directly with the ribosome. The stimulation of RF-1 and RF-2 is significantly reduced by GTP and GDP, but not by GMP. The protein is Peptide chain release factor 3 of Pseudoalteromonas atlantica (strain T6c / ATCC BAA-1087).